Reading from the N-terminus, the 328-residue chain is MSEKIYEYKDENNWFIGKMTGHNLISGWGVKHTTIKKIDDLLDGIAATLDWENPKGYDVSVVRYQSPLSLITFIIDMINQETQREIKVIPHAGTILLMENAKLLAVYLPEGGVSTATFFATSEQGFGDTILIATRNEGKTKEFRNLFGQLGYRVENLNDYPELPEVAETGTTFEENARLKAETISHLTGKMVLADDSGLKVDALGGLPGVWSARFSGPDATDAKNNAKLLHELAMVFEQKKRSAQFHTTLVVAAPNKDSLVVEAEWPGYIATQPKGENGFGYDPVFIVGETGRHAAELEADQKNQLSHRGQAVRKLMEVFPAWQAKQS.

The tract at residues 1-129 (MSEKIYEYKD…ATSEQGFGDT (129 aa)) is unknown. The segment at 130-324 (ILIATRNEGK…KLMEVFPAWQ (195 aa)) is NTP pyrophosphatase. 134–139 (TRNEGK) serves as a coordination point for substrate. Catalysis depends on aspartate 196, which acts as the Proton acceptor. Residue aspartate 196 coordinates Mg(2+). Substrate contacts are provided by residues serine 197, 280 to 283 (FGYD), lysine 303, and 308 to 309 (HR).

The protein belongs to the HAM1 NTPase family. As to quaternary structure, homodimer. Requires Mg(2+) as cofactor.

The enzyme catalyses XTP + H2O = XMP + diphosphate + H(+). It carries out the reaction dITP + H2O = dIMP + diphosphate + H(+). The catalysed reaction is ITP + H2O = IMP + diphosphate + H(+). Pyrophosphatase that catalyzes the hydrolysis of nucleoside triphosphates to their monophosphate derivatives, with a high preference for the non-canonical purine nucleotides XTP (xanthosine triphosphate), dITP (deoxyinosine triphosphate) and ITP. Seems to function as a house-cleaning enzyme that removes non-canonical purine nucleotides from the nucleotide pool, thus preventing their incorporation into DNA/RNA and avoiding chromosomal lesions. This chain is dITP/XTP pyrophosphatase, found in Streptococcus pyogenes serotype M18 (strain MGAS8232).